Reading from the N-terminus, the 857-residue chain is Facilitated trehalose transporter Tret1-1 (857 aa).

Disordered regions lie at residues 1–28 (MSGR…KLKE) and 62–203 (DPFL…KATS). At 1-392 (MSGRDSRGAG…VYRPTTNPIY (392 aa)) the chain is on the cytoplasmic side. A compositionally biased stretch (polar residues) spans 69–81 (VSPQRHPQNTVRT). A compositionally biased stretch (basic and acidic residues) spans 134-143 (EIREHRDRQQ). The segment covering 171–181 (GNSNTNSNKAA) has biased composition (polar residues). 5 positions are modified to phosphoserine: serine 248, serine 249, serine 250, serine 320, and serine 322. Residues 327–346 (LTSRQHFQQQRSISTDSRKS) are disordered. Residues 330–341 (RQHFQQQRSIST) show a composition bias toward polar residues. The chain crosses the membrane as a helical span at residues 393–413 (IWTQVLAALSVSLGSLVVGFV). The Extracellular segment spans residues 414 to 440 (SAYTSPALVSMTDRNITSFEVTQDAGS). Residue asparagine 428 is glycosylated (N-linked (GlcNAc...) asparagine). Residues 441-461 (WVGGIMPLAGLAGGIAGGPLI) form a helical membrane-spanning segment. At 462–473 (EYLGRRNTILAT) the chain is on the cytoplasmic side. Residues 474–494 (AVPFIVSSLLIACAVNVAMVL) traverse the membrane as a helical segment. The Extracellular portion of the chain corresponds to 495–497 (CGR). The chain crosses the membrane as a helical span at residues 498-518 (FLAGFCVGIASLSLPVYLGET). Topologically, residues 519–528 (VQPEVRGTLG) are cytoplasmic. Residues 529 to 549 (LLPTAFGNIGILLCFVAGSFM) traverse the membrane as a helical segment. Residue asparagine 550 is glycosylated (N-linked (GlcNAc...) asparagine). The Extracellular portion of the chain corresponds to 550–552 (NWS). Residues 553-573 (MLAFLGAALPVPFLILMFLIP) form a helical membrane-spanning segment. Residues 574–636 (ETPRWFVGRG…ELFKRINLKP (63 aa)) lie on the Cytoplasmic side of the membrane. The chain crosses the membrane as a helical span at residues 637-657 (LSISLGLMFFQQFSGINAVIF). Topologically, residues 658–673 (YTVQIFKDAGSTIDSN) are extracellular. The chain crosses the membrane as a helical span at residues 674-694 (LCTIIVGIVNFFATFMGILLI). Over 695–700 (DRLGRK) the chain is Cytoplasmic. The helical transmembrane segment at 701-721 (ILLYISDIAMILTLSILGGFF) threads the bilayer. Over 722–740 (YCKAHGPDVSHLGWLPLTC) the chain is Extracellular. The helical transmembrane segment at 741–761 (FVIYILGFSLGFGPIPWLMMG) threads the bilayer. The Cytoplasmic segment spans residues 762-770 (EILPAKIRG). A helical transmembrane segment spans residues 771-791 (PAASVVTAFNWFCTFVVTKTF). The Extracellular segment spans residues 792-801 (QDLTGAMGAH). A helical membrane pass occupies residues 802–822 (GAFWLFGAICFVGLFFVIIYV). The Cytoplasmic portion of the chain corresponds to 823–857 (PETQGKTLEDIERKMMGRVRRMSSVANIKPLSFNM). Phosphoserine is present on residues serine 845 and serine 846.

This sequence belongs to the major facilitator superfamily. Sugar transporter (TC 2.A.1.1) family. Trehalose transporter subfamily.

It is found in the cell membrane. Low-capacity facilitative transporter for trehalose. Does not transport maltose, sucrose or lactose. Mediates the bidirectional transfer of trehalose. Responsible for the transport of trehalose synthesized in the fat body and the incorporation of trehalose into other tissues that require a carbon source, thereby regulating trehalose levels in the hemolymph. The protein is Facilitated trehalose transporter Tret1-1 of Drosophila simulans (Fruit fly).